The chain runs to 519 residues: Cytochrome P450 52A10 (519 aa).

Cysteine 466 lines the heme pocket.

Belongs to the cytochrome P450 family. The cofactor is heme.

Its subcellular location is the membrane. Together with an NADPH cytochrome P450 the enzyme system catalyzes the terminal hydroxylation as the first step in the assimilation of alkanes and fatty acids. The sequence is that of Cytochrome P450 52A10 (CYP52A10) from Candida maltosa (Yeast).